The following is a 454-amino-acid chain: MTLEKNKDSFTNIIDLSLINKEQKVTFTPTKEIYTELLKKRLLTIALLVFIIKIGMAIPLPYIDQTKLLNNATSMFDLSGPGLAAVSARASQKIGLFTLGITPSINASIILQLAFVINPNLKKLQREEGESGRRKLIKYTRYLTLLLAITQSVFLIFSLRAFIFEWSILKLFELSCVLSSGAMIILWISECITKTGITNGSSFLIFLNIVSVLPEQIGMSFKNLDIFSFEGLIVILTFSITVWAAIFLQQTLYIIPLKNPKLGQNELTKKLVEDSLYLPFRLNQAGVMPVVFASYLIPILKTGGIYILLKINSFNLFPFLIKFPEVVNQSLESIVEAGLICLFALFYSGLIIDPKDVADELQKSGFFIFAIRPGEKTRNYLEKIFKELSLIGALILAFNVVLLNLVGFVFNLSIFKGFSIGSQIILLGVVTEILQKVQALVLNDVYKRIRDRNK.

The next 10 helical transmembrane spans lie at 43–63, 97–117, 144–164, 168–188, 201–221, 226–246, 289–309, 334–354, 390–410, and 414–434; these read LTIA…LPYI, FTLG…AFVI, TLLL…AFIF, ILKL…ILWI, SSFL…GMSF, IFSF…WAAI, PVVF…YILL, IVEA…IIDP, LIGA…GFVF, and IFKG…TEIL.

Belongs to the SecY/SEC61-alpha family. As to quaternary structure, component of the plastid Sec protein translocase complex, which is composed of at least SecY and SecE.

Its subcellular location is the plastid. The protein resides in the chloroplast thylakoid membrane. The central subunit of the protein translocation channel SecYE. Consists of two halves formed by TMs 1-5 and 6-10. These two domains form a lateral gate at the front which open onto the bilayer between TMs 2 and 7, and are clamped together by SecE at the back. The channel is closed by both a pore ring composed of hydrophobic SecY resides and a short helix (helix 2A) on the extracellular side of the membrane which forms a plug. In Heterosigma akashiwo (strain NIES-293 / 8280G21-1), this protein is Protein translocase subunit SecY.